An 81-amino-acid polypeptide reads, in one-letter code: ATP synthase subunit c (81 aa).

Transmembrane regions (helical) follow at residues 6–26 (AAASVIAAALAVGLAAIGPGF) and 57–77 (LAFMESLTIYGLVIALVLLFA).

The protein belongs to the ATPase C chain family. In terms of assembly, F-type ATPases have 2 components, F(1) - the catalytic core - and F(0) - the membrane proton channel. F(1) has five subunits: alpha(3), beta(3), gamma(1), delta(1), epsilon(1). F(0) has four main subunits: a(1), b(1), b'(1) and c(10-14). The alpha and beta chains form an alternating ring which encloses part of the gamma chain. F(1) is attached to F(0) by a central stalk formed by the gamma and epsilon chains, while a peripheral stalk is formed by the delta, b and b' chains.

The protein resides in the cellular thylakoid membrane. Its function is as follows. F(1)F(0) ATP synthase produces ATP from ADP in the presence of a proton or sodium gradient. F-type ATPases consist of two structural domains, F(1) containing the extramembraneous catalytic core and F(0) containing the membrane proton channel, linked together by a central stalk and a peripheral stalk. During catalysis, ATP synthesis in the catalytic domain of F(1) is coupled via a rotary mechanism of the central stalk subunits to proton translocation. Functionally, key component of the F(0) channel; it plays a direct role in translocation across the membrane. A homomeric c-ring of between 10-14 subunits forms the central stalk rotor element with the F(1) delta and epsilon subunits. This Rippkaea orientalis (strain PCC 8801 / RF-1) (Cyanothece sp. (strain PCC 8801)) protein is ATP synthase subunit c.